The chain runs to 946 residues: Inter-alpha-trypsin inhibitor heavy chain H2 (946 aa).

A signal peptide spans 1–18; that stretch reads MQRLACVLIWLFLLEEQA. Residues 19–54 constitute a propeptide that is removed on maturation; sequence FEIPANEYSEFAGYSNLVELAPDKFPFVQENRRYQR. Residues 56 to 185 enclose the VIT domain; sequence LPEESGEMTD…KVQFELHYQE (130 aa). A Phosphoserine modification is found at Ser-60. 2 N-linked (GlcNAc...) asparagine glycosylation sites follow: Asn-118 and Asn-263. 4-carboxyglutamate occurs at positions 282 and 283. Residues 308-468 form the VWFA domain; it reads PKNILFVIDV…YDFLKRLSNE (161 aa). Asn-445 carries N-linked (GlcNAc...) asparagine glycosylation. The residue at position 466 (Ser-466) is a Phosphoserine. An N-linked (GlcNAc...) asparagine glycan is attached at Asn-578. Asp-702 is modified (aspartate 1-(chondroitin 4-sulfate)-ester). A propeptide spanning residues 703-946 is cleaved from the precursor; sequence PHFIIYLPKS…PQLYSFLKRP (244 aa). Position 886 is a phosphoserine (Ser-886).

The protein belongs to the ITIH family. In terms of assembly, I-alpha-I plasma protease inhibitors are assembled from one or two heavy chains (HC) and one light chain, bikunin. Inter-alpha-inhibitor (I-alpha-I) is composed of ITIH1/HC1, ITIH2/HC2 and bikunin. In terms of processing, heavy chains are linked to bikunin via chondroitin 4-sulfate esterified to the alpha-carboxyl of the C-terminal aspartate after propeptide cleavage. Phosphorylated by FAM20C in the extracellular medium.

It localises to the secreted. In terms of biological role, may act as a carrier of hyaluronan in serum or as a binding protein between hyaluronan and other matrix protein, including those on cell surfaces in tissues to regulate the localization, synthesis and degradation of hyaluronan which are essential to cells undergoing biological processes. This is Inter-alpha-trypsin inhibitor heavy chain H2 (ITIH2) from Mesocricetus auratus (Golden hamster).